The primary structure comprises 822 residues: MSGWRKIYYKLLNLPLKLLVKSKVIPADPVTELGLDPSRPILYVLPYNSKADLLTLRAQCQAQDLPDPLIPLEIDGVQLPSHVFIDNGPRVFRYYAPKQESVKIFHDYLDLHRNNPELDIQMLPVSVMFGRSPGREGHGTPHLRVLNGVQKFFAVLWLGRDSFVRFSTTVSLRRMASEHGTDKTIAHKLARVARMHFSRQRLAAVGPSLPARQDLFKKLLTSKAIEKAVADEARTKKISHEKAQQNAITLMEEIAADFSYEAVRLSDRVLSWTWNRLYQGINVHNAERVRQLAQDGHEIVYVPCHRSHMDYLLLSYVLYHQGLVPPHIAAGINLNFWPAGPIFRRLGAFFIRRTFKGNKLYSTVFREYLGELFTRGYSVEYFVEGGRSRTGRLLEPKTGTLSMTIQAMLRGGSRPITLVPIYIGYEHVMEVGTYAKELRGATKEKESLLQMLRGLRKLRNLGQGYVNFGEPIPLTTYLNTNVPQWRDAIDPIEAQRPSWLTPAVNDLAGKIMVRINNAAAANAMNLCSTALLASRQRSLTREQLLEQLDCYLQLMRNVPYAKDVTVPDKTPEELLNHALNMNKFEVEKDNIGDIIILPREQAVLMTYYRNNIQHLLILPSLIASMVMYQRRITRAELLRQISMIYPMLKAELFLHYSKEQLPQTLDTLIDELARQQLICDKGSELVLNPARIRPLQLLAAGVRETLQRYAITLSLLSANPSINRGALEKESRIMAQRLSVLHGINAPEFFDKAVFSTLVGTLREEGYISDSGDAIQEHTLEVYNMLSALMTPEVKLTIESVSMPAETNNLLPEPEAEDKEEN.

Positions 304 to 309 (CHRSHM) match the HXXXXD motif motif.

Belongs to the GPAT/DAPAT family.

The protein resides in the cell inner membrane. The catalysed reaction is sn-glycerol 3-phosphate + an acyl-CoA = a 1-acyl-sn-glycero-3-phosphate + CoA. It participates in phospholipid metabolism; CDP-diacylglycerol biosynthesis; CDP-diacylglycerol from sn-glycerol 3-phosphate: step 1/3. This chain is Glycerol-3-phosphate acyltransferase, found in Yersinia enterocolitica serotype O:8 / biotype 1B (strain NCTC 13174 / 8081).